The following is a 119-amino-acid chain: uncharacterized protein (119 aa).

Transmembrane regions (helical) follow at residues 57–77 and 80–100; these read FSHHLSILQSMCLHFIISILF and YIFVFLFAFLLPSAFPLFILH.

Its subcellular location is the membrane. This is an uncharacterized protein from Saccharomyces cerevisiae (strain ATCC 204508 / S288c) (Baker's yeast).